The chain runs to 436 residues: 3-ketoacyl-CoA thiolase (436 aa).

Cys99 acts as the Acyl-thioester intermediate in catalysis. Active-site proton acceptor residues include His392 and Cys422.

Belongs to the thiolase-like superfamily. Thiolase family. Heterotetramer of two alpha chains (FadJ) and two beta chains (FadI).

It localises to the cytoplasm. It carries out the reaction an acyl-CoA + acetyl-CoA = a 3-oxoacyl-CoA + CoA. It participates in lipid metabolism; fatty acid beta-oxidation. Functionally, catalyzes the final step of fatty acid oxidation in which acetyl-CoA is released and the CoA ester of a fatty acid two carbons shorter is formed. This is 3-ketoacyl-CoA thiolase from Shewanella sediminis (strain HAW-EB3).